Consider the following 232-residue polypeptide: 6-phosphogluconolactonase (232 aa).

This sequence belongs to the glucosamine/galactosamine-6-phosphate isomerase family. 6-phosphogluconolactonase subfamily.

The catalysed reaction is 6-phospho-D-glucono-1,5-lactone + H2O = 6-phospho-D-gluconate + H(+). The protein operates within carbohydrate degradation; pentose phosphate pathway; D-ribulose 5-phosphate from D-glucose 6-phosphate (oxidative stage): step 2/3. In terms of biological role, hydrolysis of 6-phosphogluconolactone to 6-phosphogluconate. This chain is 6-phosphogluconolactonase (pgl), found in Rhizobium meliloti (strain 1021) (Ensifer meliloti).